An 89-amino-acid chain; its full sequence is Long neurotoxin homolog TA-bm16 (89 aa).

Positions Met-1–Thr-21 are cleaved as a signal peptide. Intrachain disulfides connect Cys-24-Cys-45, Cys-27-Cys-32, Cys-38-Cys-66, Cys-70-Cys-81, and Cys-82-Cys-87.

The protein belongs to the three-finger toxin family. Ancestral subfamily. Orphan group V sub-subfamily. In terms of tissue distribution, expressed by the venom gland.

The protein localises to the secreted. In terms of biological role, exhibits M2 muscarinic acetylcholine receptor (CHRM2)-blocking activity, but has a weak binding activity toward nicotinic AChR. Moreover, it inhibits collagen-induced platelet aggregation. The polypeptide is Long neurotoxin homolog TA-bm16 (Bungarus multicinctus (Many-banded krait)).